The sequence spans 829 residues: Leucine--tRNA ligase (829 aa).

Positions 34–44 (PYPSGNIHMGH) match the 'HIGH' region motif. The 'KMSKS' region signature appears at 591–595 (KMSKS). Lys594 lines the ATP pocket.

This sequence belongs to the class-I aminoacyl-tRNA synthetase family.

It is found in the cytoplasm. The catalysed reaction is tRNA(Leu) + L-leucine + ATP = L-leucyl-tRNA(Leu) + AMP + diphosphate. This chain is Leucine--tRNA ligase, found in Ehrlichia chaffeensis (strain ATCC CRL-10679 / Arkansas).